The chain runs to 72 residues: Cytotoxin 9 (72 aa).

An N-terminal signal peptide occupies residues 1 to 12; it reads VVTIVCLDLGYT. 4 disulfide bridges follow: Cys15/Cys33, Cys26/Cys50, Cys54/Cys65, and Cys66/Cys71.

Belongs to the three-finger toxin family. Short-chain subfamily. Type IA cytotoxin sub-subfamily. Monomer in solution; Homodimer and oligomer in the presence of negatively charged lipids forming a pore with a size ranging between 20 and 30 Angstroms. In terms of tissue distribution, expressed by the venom gland.

The protein resides in the secreted. Functionally, shows cytolytic activity on many different cells by forming a pore in lipid membranes. In vivo, increases heart rate or kills the animal by cardiac arrest. In addition, it binds to heparin with high affinity, interacts with Kv channel-interacting protein 1 (KCNIP1) in a calcium-independent manner, and binds to integrin alpha-V/beta-3 (ITGAV/ITGB3) with moderate affinity. Preferentially binds acidic phospholipids like phosphatidylserine, phosphatidic acid and phosphatidyl glycerol. Has hemolytic activity towards human erythrocytes (EC(50)=0.171 uM) and cytolytic activity towards various cell lines. The chain is Cytotoxin 9 from Naja naja (Indian cobra).